Here is an 832-residue protein sequence, read N- to C-terminus: Conserved oligomeric Golgi complex subunit 5 (832 aa).

Composition is skewed to pro residues over residues 1–11 and 23–38; these read MALPPSSPSPS and NPPP…PPQT. Residues 1 to 49 form a disordered region; sequence MALPPSSPSPSSPSLQRLSTFKNPPPSSLSSGAPPPQTPSSSSSSPLDS. Residues 39-49 show a composition bias toward low complexity; that stretch reads PSSSSSSPLDS.

The protein belongs to the COG5 family. As to quaternary structure, homodimer. Component of the conserved oligomeric Golgi complex which is composed of eight different subunits and is required for normal Golgi morphology and localization. Interacts with COG3, COG6, COG7 and COG8.

It is found in the golgi apparatus membrane. Its function is as follows. Required for normal Golgi function. The chain is Conserved oligomeric Golgi complex subunit 5 from Arabidopsis thaliana (Mouse-ear cress).